A 469-amino-acid polypeptide reads, in one-letter code: Phosphatidylinositol 4-kinase type 2-beta (469 aa).

Residues 1–84 are disordered; sequence MAEACEPTRP…LDRTRTTSSE (84 aa). Ser37 bears the Phosphoserine mark. Positions 108-439 constitute a PI3K/PI4K catalytic domain; that stretch reads GVFPERISQG…AQMPCVIVEC (332 aa). The G-loop stretch occupies residues 114-120; the sequence is ISQGSSG. Positions 121 and 136 each coordinate ATP. Positions 141–143 are important for substrate binding; that stretch reads EPY. The segment at 149-162 is important for interaction with membranes; sequence KWTKYVHKVCCPCC. Residues 245-248 and 259-260 contribute to the ATP site; these read QLFV and RR. An important for interaction with membranes region spans residues 252–260; sequence KEAEYWLRR. A catalytic loop region spans residues 289–297; that stretch reads RNTDRGNDN. The activation loop stretch occupies residues 330–350; sequence AIDNGLAFPFKHPDEWRAYPF. Asp332 contacts ATP. Residues 345–354 are important for interaction with membranes; the sequence is WRAYPFHWAW.

The protein belongs to the PI3/PI4-kinase family. Type II PI4K subfamily.

The protein resides in the cytoplasm. It is found in the cytosol. Its subcellular location is the golgi apparatus membrane. The protein localises to the endoplasmic reticulum membrane. It localises to the cell membrane. The protein resides in the early endosome membrane. The enzyme catalyses a 1,2-diacyl-sn-glycero-3-phospho-(1D-myo-inositol) + ATP = a 1,2-diacyl-sn-glycero-3-phospho-(1D-myo-inositol 4-phosphate) + ADP + H(+). In terms of biological role, together with PI4K2A and the type III PI4Ks (PIK4CA and PIK4CB) it contributes to the overall PI4-kinase activity of the cell. This contribution may be especially significant in plasma membrane, endosomal and Golgi compartments. The phosphorylation of phosphatidylinositol (PI) to PI4P is the first committed step in the generation of phosphatidylinositol 4,5-bisphosphate (PIP2), a precursor of the second messenger inositol 1,4,5-trisphosphate (InsP3). Contributes to the production of InsP3 in stimulated cells and is likely to be involved in the regulation of vesicular trafficking. This Mus musculus (Mouse) protein is Phosphatidylinositol 4-kinase type 2-beta (Pi4k2b).